The primary structure comprises 257 residues: 3-deoxy-manno-octulosonate cytidylyltransferase (257 aa).

This sequence belongs to the KdsB family.

It is found in the cytoplasm. The catalysed reaction is 3-deoxy-alpha-D-manno-oct-2-ulosonate + CTP = CMP-3-deoxy-beta-D-manno-octulosonate + diphosphate. It functions in the pathway nucleotide-sugar biosynthesis; CMP-3-deoxy-D-manno-octulosonate biosynthesis; CMP-3-deoxy-D-manno-octulosonate from 3-deoxy-D-manno-octulosonate and CTP: step 1/1. Its pathway is bacterial outer membrane biogenesis; lipopolysaccharide biosynthesis. Activates KDO (a required 8-carbon sugar) for incorporation into bacterial lipopolysaccharide in Gram-negative bacteria. The sequence is that of 3-deoxy-manno-octulosonate cytidylyltransferase from Xylella fastidiosa (strain 9a5c).